The chain runs to 430 residues: Adenylosuccinate synthetase (430 aa).

GTP contacts are provided by residues glycine 12–lysine 18 and glycine 40–threonine 42. Residue aspartate 13 is the Proton acceptor of the active site. Mg(2+) contacts are provided by aspartate 13 and glycine 40. Residues aspartate 13–lysine 16, asparagine 38–histidine 41, threonine 128, arginine 142, glutamine 223, threonine 238, and arginine 302 each bind IMP. The Proton donor role is filled by histidine 41. Threonine 298–arginine 304 is a substrate binding site. GTP-binding positions include arginine 304, serine 330–aspartate 332, and serine 412–glycine 414.

Belongs to the adenylosuccinate synthetase family. Homodimer. It depends on Mg(2+) as a cofactor.

It is found in the cytoplasm. It catalyses the reaction IMP + L-aspartate + GTP = N(6)-(1,2-dicarboxyethyl)-AMP + GDP + phosphate + 2 H(+). Its pathway is purine metabolism; AMP biosynthesis via de novo pathway; AMP from IMP: step 1/2. In terms of biological role, plays an important role in the de novo pathway of purine nucleotide biosynthesis. Catalyzes the first committed step in the biosynthesis of AMP from IMP. The polypeptide is Adenylosuccinate synthetase (Exiguobacterium sibiricum (strain DSM 17290 / CCUG 55495 / CIP 109462 / JCM 13490 / 255-15)).